The primary structure comprises 817 residues: Trehalose-phosphatase (817 aa).

Residues methionine 1 to isoleucine 547 are glycosyltransferase.

This sequence in the N-terminal section; belongs to the glycosyltransferase 20 family. The protein in the C-terminal section; belongs to the trehalose phosphatase family. As to quaternary structure, component of the trehalose synthase complex that contains at least tps1, ntp1, and tpp1. Interacts with tps1. Interacts with ntp1. The cofactor is Mg(2+).

The enzyme catalyses alpha,alpha-trehalose 6-phosphate + H2O = alpha,alpha-trehalose + phosphate. Its pathway is carbohydrate biosynthesis. Functionally, phosphatase catalytic subunit of the trehalose synthase complex that catalyzes the production of trehalose from glucose-6-phosphate and UDP-alpha-D-glucose in a two step process. The disaccharide trehalose serves as a storage carbohydrate that is mobilized during nutrient stress and spore germination. Together with ntp1, regulates the level of trehalose as a protectant for cell integrity during thermal, osmotic, and oxidative stress. This is Trehalose-phosphatase from Schizosaccharomyces pombe (strain 972 / ATCC 24843) (Fission yeast).